We begin with the raw amino-acid sequence, 291 residues long: ATP synthase gamma chain (291 aa).

It belongs to the ATPase gamma chain family. F-type ATPases have 2 components, CF(1) - the catalytic core - and CF(0) - the membrane proton channel. CF(1) has five subunits: alpha(3), beta(3), gamma(1), delta(1), epsilon(1). CF(0) has three main subunits: a, b and c.

Its subcellular location is the cell inner membrane. Produces ATP from ADP in the presence of a proton gradient across the membrane. The gamma chain is believed to be important in regulating ATPase activity and the flow of protons through the CF(0) complex. In Caulobacter vibrioides (strain NA1000 / CB15N) (Caulobacter crescentus), this protein is ATP synthase gamma chain.